The primary structure comprises 376 residues: Queuine tRNA-ribosyltransferase (376 aa).

Residue Asp-93 is the Proton acceptor of the active site. Substrate contacts are provided by residues 93–97 (DSGGF), Asp-147, Gln-190, and Gly-217. The tract at residues 248 to 254 (GVGTPDD) is RNA binding. Asp-267 acts as the Nucleophile in catalysis. An RNA binding; important for wobble base 34 recognition region spans residues 272–276 (TRAGR).

It belongs to the queuine tRNA-ribosyltransferase family. As to quaternary structure, homodimer. Within each dimer, one monomer is responsible for RNA recognition and catalysis, while the other monomer binds to the replacement base PreQ1.

The catalysed reaction is 7-aminomethyl-7-carbaguanine + guanosine(34) in tRNA = 7-aminomethyl-7-carbaguanosine(34) in tRNA + guanine. Its pathway is tRNA modification; tRNA-queuosine biosynthesis. Functionally, catalyzes the base-exchange of a guanine (G) residue with the queuine precursor 7-aminomethyl-7-deazaguanine (PreQ1) at position 34 (anticodon wobble position) in tRNAs with GU(N) anticodons (tRNA-Asp, -Asn, -His and -Tyr). Catalysis occurs through a double-displacement mechanism. The nucleophile active site attacks the C1' of nucleotide 34 to detach the guanine base from the RNA, forming a covalent enzyme-RNA intermediate. The proton acceptor active site deprotonates the incoming PreQ1, allowing a nucleophilic attack on the C1' of the ribose to form the product. After dissociation, two additional enzymatic reactions on the tRNA convert PreQ1 to queuine (Q), resulting in the hypermodified nucleoside queuosine (7-(((4,5-cis-dihydroxy-2-cyclopenten-1-yl)amino)methyl)-7-deazaguanosine). The sequence is that of Queuine tRNA-ribosyltransferase from Mesorhizobium japonicum (strain LMG 29417 / CECT 9101 / MAFF 303099) (Mesorhizobium loti (strain MAFF 303099)).